The sequence spans 132 residues: MKKNITKVIIASTVIATGLLTQTNDAKAFFSYEWKGLEIAKNLADQAKKDDERADKLIKEADEKNEHYKGKTVEDLYVIAKKMGKGNTIAVVKIKDGGKNGYYTFDITRPLEEHRKNIPVVKNGEIDSITWY.

An N-terminal signal peptide occupies residues 1 to 28 (MKKNITKVIIASTVIATGLLTQTNDAKA).

This sequence belongs to the CHIPS/FLIPr family.

Its subcellular location is the secreted. In terms of biological role, may be involved in countering the first line of host defense mechanisms. Impairs the leukocyte response to FPRL1 agonists by binding directly to host FPRL1. This Staphylococcus aureus (strain MW2) protein is FPRL1 inhibitory protein (flr).